Consider the following 475-residue polypeptide: U3 small nucleolar RNA-interacting protein 2 (475 aa).

The disordered stretch occupies residues 1–75; the sequence is MSTAVATRKR…EEEEELEETA (75 aa). A Nuclear localization signal motif is present at residues 8-40; that stretch reads RKRAKPAPGPGAAPVAGKRRRKVDSAADRGKSK. An Omega-N-methylarginine modification is found at Arg10. N6-acetyllysine is present on residues Lys12 and Lys25. Phosphoserine is present on residues Ser50, Ser51, Ser53, and Ser57. The segment covering 65–74 has biased composition (acidic residues); sequence EEEEEELEET. Residue Lys113 forms a Glycyl lysine isopeptide (Lys-Gly) (interchain with G-Cter in SUMO2) linkage. 7 WD repeats span residues 144-183, 197-236, 239-278, 281-320, 322-360, 374-413, and 419-460; these read GHQLSITCLVITPDDLAIFSAAKDCTIIKWSVETGRKLHV, GHSSHVLCMAISSDGKYLASGDRSKLILIWEAQSCQHLYT, GHRDAVSGLAFRKGTHQLYSTSHDRSVKVWNAAENSYVET, GHQDAVAALDALSRECCVTAGGRDGTVRVWKIPEESQLVF, GHQGSIDCIHLINEEHMVSGADDGSVALWGLSKKRPLAL, EQPFWVSSVAALLNTDLVATGSHNARVRLWQCGEGFRQLD, and PLVG…NSVC. Ser470 carries the phosphoserine modification.

It belongs to the WD repeat RRP9 family. As to quaternary structure, interacts specifically with the U3 small nucleolar RNA (U3 snoRNA). Binds a sub-fragment of the U3 snoRNA surrounding the B/C motif (3UBC). This association with the U3BC RNA is dependent on the binding of a protein called 15.5K to the box B/C motif. The association of the protein with the U3BC RNA was found to be also dependent on a conserved RNA structure that flanks the box B/C motif. Part of the small subunit (SSU) processome, composed of more than 70 proteins and the RNA chaperone small nucleolar RNA (snoRNA) U3. Post-translationally, acetylation at Lys-12 and Lys-25 by KAT2B/PCAF under stress impairs pre-rRNA processing. Deacetylation by SIRT7 enhances RRP9-binding to U3 snoRNA, which is a prerequisite for pre-rRNA processing.

Its subcellular location is the nucleus. The protein resides in the nucleolus. Functionally, component of a nucleolar small nuclear ribonucleoprotein particle (snoRNP) thought to participate in the processing and modification of pre-ribosomal RNA (pre-rRNA). Part of the small subunit (SSU) processome, first precursor of the small eukaryotic ribosomal subunit. During the assembly of the SSU processome in the nucleolus, many ribosome biogenesis factors, an RNA chaperone and ribosomal proteins associate with the nascent pre-rRNA and work in concert to generate RNA folding, modifications, rearrangements and cleavage as well as targeted degradation of pre-ribosomal RNA by the RNA exosome. This chain is U3 small nucleolar RNA-interacting protein 2 (Rrp9), found in Mus musculus (Mouse).